We begin with the raw amino-acid sequence, 512 residues long: tRNA-2-methylthio-N(6)-dimethylallyladenosine synthase (512 aa).

Residues 1 to 20 (MLQQADGVSPDRSSCDTPAP) form a disordered region. In terms of domain architecture, MTTase N-terminal spans 21–137 (RTFEVRTYGC…LPTLLDRARH (117 aa)). Cysteine 30, cysteine 66, cysteine 100, cysteine 174, cysteine 178, and cysteine 181 together coordinate [4Fe-4S] cluster. Residues 160–397 (RESAYAAWVS…ELQERISWEE (238 aa)) form the Radical SAM core domain. One can recognise a TRAM domain in the interval 399–469 (RAQIGREVEL…PHHLIADAGP (71 aa)). Residues 470 to 486 (AEHRRTRAGDAHAEGRT) show a composition bias toward basic and acidic residues. The disordered stretch occupies residues 470–512 (AEHRRTRAGDAHAEGRTPKTGVGLGMPGIGAPEPAPVTQGCAL).

The protein belongs to the methylthiotransferase family. MiaB subfamily. Monomer. [4Fe-4S] cluster is required as a cofactor.

Its subcellular location is the cytoplasm. It catalyses the reaction N(6)-dimethylallyladenosine(37) in tRNA + (sulfur carrier)-SH + AH2 + 2 S-adenosyl-L-methionine = 2-methylsulfanyl-N(6)-dimethylallyladenosine(37) in tRNA + (sulfur carrier)-H + 5'-deoxyadenosine + L-methionine + A + S-adenosyl-L-homocysteine + 2 H(+). In terms of biological role, catalyzes the methylthiolation of N6-(dimethylallyl)adenosine (i(6)A), leading to the formation of 2-methylthio-N6-(dimethylallyl)adenosine (ms(2)i(6)A) at position 37 in tRNAs that read codons beginning with uridine. The protein is tRNA-2-methylthio-N(6)-dimethylallyladenosine synthase of Mycolicibacterium gilvum (strain PYR-GCK) (Mycobacterium gilvum (strain PYR-GCK)).